Consider the following 419-residue polypeptide: Ribosome biogenesis protein WDR12 homolog (419 aa).

Positions 10-91 are ubiquitin-like (UBL) domain; it reads VQVHLKTKQE…EDAIDIEYVE (82 aa). 7 WD repeats span residues 103 to 140, 142 to 184, 191 to 230, 249 to 287, 289 to 328, 334 to 374, and 378 to 416; these read LHDD…KLTI, GHTA…NAVE, GHER…TSEG, GHRE…IKTE, STNK…GSVV, GHNA…APLY, and GHGE…IENM.

This sequence belongs to the WD repeat WDR12/YTM1 family.

The protein localises to the nucleus. Its subcellular location is the nucleolus. It localises to the nucleoplasm. In terms of biological role, required for maturation of ribosomal RNAs and formation of the large ribosomal subunit. In Drosophila virilis (Fruit fly), this protein is Ribosome biogenesis protein WDR12 homolog.